The chain runs to 511 residues: uncharacterized protein (511 aa).

14 helical membrane passes run 7-27 (WVIS…NTAL), 46-66 (VNPI…GPLL), 80-100 (LPVF…ALMA), 107-127 (GAAT…SFPI), 134-154 (LLVL…LGTI), 163-183 (WLFF…YFFL), 200-220 (AGIL…IFLQ), 226-246 (SGYV…LLIV), 266-286 (VLGL…LSAF), 301-321 (LILL…LSAL), 329-349 (GMLG…WLHI), 357-377 (MFAA…AAGL), 394-414 (TAVQ…IGFF), and 437-457 (LFFI…CMNA). A disordered region spans residues 465–486 (AHKPHDKAKTAPEKPAVSAQGL).

The protein belongs to the major facilitator superfamily.

Its subcellular location is the cell membrane. This is an uncharacterized protein from Bacillus subtilis (strain 168).